Reading from the N-terminus, the 179-residue chain is Large ribosomal subunit protein uL5 (179 aa).

It belongs to the universal ribosomal protein uL5 family. As to quaternary structure, part of the 50S ribosomal subunit; part of the 5S rRNA/L5/L18/L25 subcomplex. Contacts the 5S rRNA and the P site tRNA. Forms a bridge to the 30S subunit in the 70S ribosome.

In terms of biological role, this is one of the proteins that bind and probably mediate the attachment of the 5S RNA into the large ribosomal subunit, where it forms part of the central protuberance. In the 70S ribosome it contacts protein S13 of the 30S subunit (bridge B1b), connecting the 2 subunits; this bridge is implicated in subunit movement. Contacts the P site tRNA; the 5S rRNA and some of its associated proteins might help stabilize positioning of ribosome-bound tRNAs. This is Large ribosomal subunit protein uL5 from Nitrosomonas eutropha (strain DSM 101675 / C91 / Nm57).